Here is a 1487-residue protein sequence, read N- to C-terminus: Murinoglobulin-1 (1487 aa).

Residues 1 to 24 (MKKNREAQLCLFSALLAFLPFASL) form the signal peptide. Cys48 and Cys86 are joined by a disulfide. Residues Asn55 and Asn247 are each glycosylated (N-linked (GlcNAc...) asparagine). 2 disulfide bridges follow: Cys251/Cys283 and Cys269/Cys295. N-linked (GlcNAc...) asparagine glycans are attached at residues Asn301, Asn321, Asn393, and Asn508. 3 cysteine pairs are disulfide-bonded: Cys468–Cys563, Cys595–Cys784, and Cys643–Cys689. Residues 686 to 745 (PTYCYEMNMVVLSAPAVESELSPRGGEFEMMPLGVNKSPLPKEPPRKDPPPKDPVIETIR) form a bait region region. N-linked (GlcNAc...) asparagine glycosylation is found at Asn760, Asn787, and Asn882. Intrachain disulfides connect Cys860–Cys896, Cys934–Cys1334, Cys1092–Cys1140, and Cys1365–Cys1480. Residues 985–988 (CGEQ) constitute a cross-link (isoglutamyl cysteine thioester (Cys-Gln)). Residue Asn1004 is glycosylated (N-linked (GlcNAc...) asparagine). Asn1153, Asn1324, and Asn1437 each carry an N-linked (GlcNAc...) asparagine glycan.

This sequence belongs to the protease inhibitor I39 (alpha-2-macroglobulin) family. Monomer. As to expression, plasma.

The protein localises to the secreted. In terms of biological role, a proteinase activates the inhibitor by specific proteolysis in the bait region, which, by an unknown mechanism leads to reaction at the cysteinyl-glutamyl internal thiol ester site and to a conformational change, whereby the proteinase is trapped and/or covalently bound to the inhibitor. While in the tetrameric proteinase inhibitors steric inhibition is sufficiently strong, monomeric forms need a covalent linkage between the activated glutamyl residue of the original thiol ester and a terminal amino group of a lysine or another nucleophilic group on the proteinase, for inhibition to be effective. This Rattus norvegicus (Rat) protein is Murinoglobulin-1.